A 160-amino-acid chain; its full sequence is Protein BOLA1, chloroplastic (160 aa).

The N-terminal 50 residues, 1–50 (MFSSSIRLIVSGFHRTQPLKSPVNSPSVFISVPKFFNSESKSTGTGSRSV), are a transit peptide targeting the chloroplast. Residues 39-61 (ESKSTGTGSRSVAMSSVEKTGSD) are compositionally biased toward polar residues. A disordered region spans residues 39–66 (ESKSTGTGSRSVAMSSVEKTGSDSGAIE).

Belongs to the bolA/yrbA family. As to quaternary structure, interacts in vitro with GRXS14, GRXS15, GRXS16 and GRXS17, but not with GRXC5. Interacts in vivo only with GRXS14 and GRXS16.

It localises to the plastid. Its subcellular location is the chloroplast. In terms of biological role, may act either alone or in interaction with glutaredoxin as a redox-regulated transcriptional regulator, or as a factor regulating Fe-S cluster biogenesis. The glutaredoxin-BOLA1 heterodimers bind a labile, oxygen sensitive iron-sulfur cluster. The sequence is that of Protein BOLA1, chloroplastic from Arabidopsis thaliana (Mouse-ear cress).